A 404-amino-acid polypeptide reads, in one-letter code: Probable tRNA sulfurtransferase (404 aa).

The 106-residue stretch at 60–165 (QPIVEALKLV…DEAAYISYEE (106 aa)) folds into the THUMP domain. ATP contacts are provided by residues 183–184 (ML), 208–209 (HF), arginine 265, glycine 287, and glutamine 296.

Belongs to the ThiI family.

It is found in the cytoplasm. The enzyme catalyses [ThiI sulfur-carrier protein]-S-sulfanyl-L-cysteine + a uridine in tRNA + 2 reduced [2Fe-2S]-[ferredoxin] + ATP + H(+) = [ThiI sulfur-carrier protein]-L-cysteine + a 4-thiouridine in tRNA + 2 oxidized [2Fe-2S]-[ferredoxin] + AMP + diphosphate. It carries out the reaction [ThiS sulfur-carrier protein]-C-terminal Gly-Gly-AMP + S-sulfanyl-L-cysteinyl-[cysteine desulfurase] + AH2 = [ThiS sulfur-carrier protein]-C-terminal-Gly-aminoethanethioate + L-cysteinyl-[cysteine desulfurase] + A + AMP + 2 H(+). It functions in the pathway cofactor biosynthesis; thiamine diphosphate biosynthesis. In terms of biological role, catalyzes the ATP-dependent transfer of a sulfur to tRNA to produce 4-thiouridine in position 8 of tRNAs, which functions as a near-UV photosensor. Also catalyzes the transfer of sulfur to the sulfur carrier protein ThiS, forming ThiS-thiocarboxylate. This is a step in the synthesis of thiazole, in the thiamine biosynthesis pathway. The sulfur is donated as persulfide by IscS. The chain is Probable tRNA sulfurtransferase from Streptococcus pyogenes serotype M2 (strain MGAS10270).